Here is a 1225-residue protein sequence, read N- to C-terminus: MVDVNRFKSMQITLASPSKVRSWSYGEVKKPETINYRTLKPEREGLFDEVIFGPTKDWECACGKYKRIRYRGIVCDRCGVEVTRTKVRRERMGHIELKAPVSHIWYFKGIPSRMGLTLDMSPRALEEVIYFAAYVVIDPKDTPLEHKSIMTEREYRERLREYGYGSFVAKMGAEAIQDLLKQVDLEKEIAELKEELKTATGQKRVKAIRRLDVLDAFYKSGNKPEWMILNILPVIPPDLRPMLQLDGGRFASSDLNDLYRRVINRNNRLARLLELNAPGIIVQNEKRMLQEAVDALIDNGRRGRPITGPGSRPLKSLSHMLKGKQGRFRQNLLGKRVDFSGRSVIAVGPTLKMYQCGVPREMAIELFKPFVMREIVARDIVQNVKAAKRLVERGDERIWDILEEVIKEHPVLLNRAPTLHRLGIQAFEPVLIDGKALRLHPLVCEAYNADFDGDQMAIHVPLSEEAQAEARILMLAAEHILNPKDGKPVVTPSQDMVLGNYYLTMEEAGREGEGMVFKDRDEAVMAYRNGYVHLHSRVGIATDSLNKPWTEEQRHKVLLTTVGKILFNDIMPEGLPYLQEPNNANLTEGVPAKYFLPLGGAIKEAISNLELNPPFKKKNLGNIIAEIFKRFRTTETSALLDRMKNLGYHHSTLAGLTVGIADIPVVDDKAEIIEESHKRVEQITKQFRRGMITDDERYNAVTAEWRAAREKLEKRLIANQDPKNPIVMMMDSGARGNISNFSQLAGMRGLMAAPNGRIMELPILSNFREGLSVLEMFFSTHGARKGMTDTALKTADSGYLTRRLVDVAQDVIIREDDCGTDRGLLIRSIAEGKEMIESLEERLNGRYTKKTVKHPETGAVIIGPNELITEDKAREIVNAGVEEVTIRSVFTCNTRRGVCRHCYGINLATGDAVEVGEAVGTIAAQSIGEPGTQLTMRTFHTGGVASNTDITQGLPRVQEIFEARNPKGEAVITEVKGQVTAIEEDASTRTKKVFVKGETGEGEYVVPFTARMRVEVGGQVARGAALTEGSIQPKRLLAVRDVLSVETYLLGEVQKVYRSQGVEIGDKHIEVMVRQMIRKVRVMDPGDTDLLMGTLMDINDFTDANKDVLIAGGVPATGRPVLMGITKASLETNSFLSAASFQETTRVLTDAAIRGKKDHLLGLKENVIIGKIIPAGTGMARYRNLEPHAVNEEEYLNPPVEEEGNEETTEVVVDTAVETVEETVE.

Zn(2+) is bound by residues Cys-60, Cys-62, Cys-75, and Cys-78. The Mg(2+) site is built by Asp-450, Asp-452, and Asp-454. Positions 818, 892, 899, and 902 each coordinate Zn(2+).

The protein belongs to the RNA polymerase beta' chain family. In terms of assembly, the RNAP catalytic core consists of 2 alpha, 1 beta, 1 beta' and 1 omega subunit. When a sigma factor is associated with the core the holoenzyme is formed, which can initiate transcription. The cofactor is Mg(2+). It depends on Zn(2+) as a cofactor.

It carries out the reaction RNA(n) + a ribonucleoside 5'-triphosphate = RNA(n+1) + diphosphate. Functionally, DNA-dependent RNA polymerase catalyzes the transcription of DNA into RNA using the four ribonucleoside triphosphates as substrates. This is DNA-directed RNA polymerase subunit beta' from Streptococcus pneumoniae (strain ATCC BAA-255 / R6).